Reading from the N-terminus, the 332-residue chain is Acetyl-coenzyme A carboxylase carboxyl transferase subunit beta (332 aa).

Residues 24 to 293 enclose the CoA carboxyltransferase N-terminal domain; that stretch reads LWIKCPDSGH…PEVIVESEPE (270 aa). Positions 288-332 are disordered; sequence VESEPEPEPEPVVAEIIPPTSDLPVSAPAPAPVAAQTPAPAAPSA. Low complexity predominate over residues 298–332; it reads PVVAEIIPPTSDLPVSAPAPAPVAAQTPAPAAPSA.

It belongs to the AccD/PCCB family. In terms of assembly, acetyl-CoA carboxylase is a heterohexamer composed of biotin carboxyl carrier protein (AccB), biotin carboxylase (AccC) and two subunits each of ACCase subunit alpha (AccA) and ACCase subunit beta (AccD).

It localises to the cytoplasm. It carries out the reaction N(6)-carboxybiotinyl-L-lysyl-[protein] + acetyl-CoA = N(6)-biotinyl-L-lysyl-[protein] + malonyl-CoA. It participates in lipid metabolism; malonyl-CoA biosynthesis; malonyl-CoA from acetyl-CoA: step 1/1. Component of the acetyl coenzyme A carboxylase (ACC) complex. Biotin carboxylase (BC) catalyzes the carboxylation of biotin on its carrier protein (BCCP) and then the CO(2) group is transferred by the transcarboxylase to acetyl-CoA to form malonyl-CoA. This chain is Acetyl-coenzyme A carboxylase carboxyl transferase subunit beta, found in Rhodopseudomonas palustris (strain BisB18).